The chain runs to 215 residues: MLQVYLVRHGETQWNAERRIQGQSDSPLTAKGEQQAMQVGERARSLGITHIISSDLGRTKRTAEIIAQACGCDITFDSRLRELDMGVLEKRQIDSLTEEEEGWRRQLVNGTQDGRIPGGESMQELSDRVHAALASCLELPQGSRPLLVSHGIALGCLVSTILGLPAWAERRLRLRNCSISRIDYQESQWLASGWVVETAGDVSHLDAPALDELQR.

Substrate is bound by residues 8–15 (RHGETQWN), 21–22 (QG), R58, K60, 82–85 (ELDM), 104–105 (RR), and 151–152 (GI). Catalysis depends on H9, which acts as the Tele-phosphohistidine intermediate. E82 acts as the Proton donor/acceptor in catalysis.

This sequence belongs to the phosphoglycerate mutase family. GpmB subfamily.

The enzyme catalyses (2R)-2-phosphoglycerate = (2R)-3-phosphoglycerate. It participates in carbohydrate degradation; glycolysis; pyruvate from D-glyceraldehyde 3-phosphate: step 3/5. The chain is Probable phosphoglycerate mutase GpmB from Salmonella agona (strain SL483).